Consider the following 196-residue polypeptide: uncharacterized protein (196 aa).

Residues 58–163 (HKFFDAIKDS…IILPNNYHKN (106 aa)) form the Bro-N domain.

This is an uncharacterized protein from Acanthamoeba polyphaga mimivirus (APMV).